We begin with the raw amino-acid sequence, 249 residues long: 2,3-bisphosphoglycerate-dependent phosphoglycerate mutase (249 aa).

Substrate contacts are provided by residues 9-16 (RHGQSQWN), 22-23 (TG), arginine 61, 88-91 (ERHY), lysine 99, 115-116 (RR), and 184-185 (GN). Catalysis depends on histidine 10, which acts as the Tele-phosphohistidine intermediate. The Proton donor/acceptor role is filled by glutamate 88.

It belongs to the phosphoglycerate mutase family. BPG-dependent PGAM subfamily. In terms of assembly, homodimer.

It carries out the reaction (2R)-2-phosphoglycerate = (2R)-3-phosphoglycerate. It participates in carbohydrate degradation; glycolysis; pyruvate from D-glyceraldehyde 3-phosphate: step 3/5. In terms of biological role, catalyzes the interconversion of 2-phosphoglycerate and 3-phosphoglycerate. In Xanthomonas axonopodis pv. citri (strain 306), this protein is 2,3-bisphosphoglycerate-dependent phosphoglycerate mutase.